We begin with the raw amino-acid sequence, 642 residues long: Threonine--tRNA ligase (642 aa).

A TGS domain is found at 1-58; sequence MQVAGKELEVQQGALCGEVLKEALSKKQFKNVVVAKCGDTLLDLTTTVPADCTDLEPV. A catalytic region spans residues 239 to 530; that stretch reads DHRKLGTQLD…LLEHTGGALP (292 aa). 3 residues coordinate Zn(2+): C331, H382, and H507.

The protein belongs to the class-II aminoacyl-tRNA synthetase family. As to quaternary structure, homodimer. The cofactor is Zn(2+).

Its subcellular location is the cytoplasm. The catalysed reaction is tRNA(Thr) + L-threonine + ATP = L-threonyl-tRNA(Thr) + AMP + diphosphate + H(+). Its function is as follows. Catalyzes the attachment of threonine to tRNA(Thr) in a two-step reaction: L-threonine is first activated by ATP to form Thr-AMP and then transferred to the acceptor end of tRNA(Thr). Also edits incorrectly charged L-seryl-tRNA(Thr). The chain is Threonine--tRNA ligase from Maridesulfovibrio salexigens (strain ATCC 14822 / DSM 2638 / NCIMB 8403 / VKM B-1763) (Desulfovibrio salexigens).